The primary structure comprises 113 residues: Protein ORF3 (113 aa).

Hydrophobic regions lie at residues 1 to 21 (MGSP…CLCC) and 32 to 52 (AVVG…GLIL). The interval 27–67 (ASRLAAVVGGATAVPAVVSGVTGLILSPSPSPIFIQPTPSL) is interaction with host HPX. An interaction with the capsid protein region spans residues 47–71 (VTGLILSPSPSPIFIQPTPSLPMSF). S70 is modified (phosphoserine; by host). The tract at residues 71-113 (FHNPGLELALDSRPAPLAPLGVTSPSAPPLPPVVDLPQLGLRR) is homodimerization, and interaction with host AMBP/bikunin. The tract at residues 89–113 (PLGVTSPSAPPLPPVVDLPQLGLRR) is disordered. An interaction with host SRC, HCK, FYN, PIK3R3 and GRB2 region spans residues 94 to 103 (SPSAPPLPPV). The PTAP/PSAP motif signature appears at 95–98 (PSAP).

This sequence belongs to the hepevirus ORF3 protein family. As to quaternary structure, forms homooligomers. Interacts with host SRC, HCK, FYN, PIK3R3 and GRB2 (via SH3 domain); binding does not activate the kinases. Interacts with host AMBP/bikunin and AMBP/alpha-1-microglobulin peptides. Interacts with host HPX/hemopexin. Interacts (when phosphorylated) with capsid protein ORF2. Interacts with host TSG101; this interaction plays a role in viral release from the host cell. Interacts with host SIRPA; this interaction down-regulates the phosphorylation of host IRF3. Post-translationally, palmitoylated in the N-terminus.

The protein resides in the host endoplasmic reticulum membrane. The protein localises to the host cytoplasm. It localises to the host cytoskeleton. It is found in the virion. Its subcellular location is the host cell membrane. Small multifunctional phosphoprotein involved in virion morphogenesis, egress and counteracting host innate immunity. Plays critical roles in the final steps of viral release by interacting with host TSG101, a member of the vacuolar protein-sorting pathway and using other cellular host proteins involved in vesicle formation pathway. Also acts as a viroporin and forms ion conductive pores allowing viral particle release. Impairs the generation of type I interferon by down-regulating host TLR3 and TLR7 as well as their downstream signaling pathways. Down-regulates the phosphorylation of host IRF3 via the interaction with host SIRP-alpha, thereby inhibiting IFN-I expression. Interacts with host microtubules. The sequence is that of Protein ORF3 from Bandicota bengalensis (lesser bandicoot rat).